The following is a 279-amino-acid chain: L-ascorbate peroxidase 5, peroxisomal (279 aa).

Histidine 39 acts as the Proton acceptor in catalysis. The tract at residues 111–134 is disordered; that stretch reads PFTPGRKDADSADDGELPNPNEGA. Histidine 158 is a binding site for heme b. Positions 159, 175, and 182 each coordinate K(+). A helical transmembrane segment spans residues 251-271; the sequence is AVTQQTLGIAVAAAVVIFTIC. Residues 272–279 carry the AKR2A-binding sequence (ABS) required for peroxisome membrane targeting motif; the sequence is YEASRRGK.

This sequence belongs to the peroxidase family. Ascorbate peroxidase subfamily. Interacts with AKR2A and AKR2B. Requires heme b as cofactor.

It is found in the peroxisome membrane. The catalysed reaction is L-ascorbate + H2O2 = L-dehydroascorbate + 2 H2O. Plays a key role in hydrogen peroxide removal. This is L-ascorbate peroxidase 5, peroxisomal (APX5) from Arabidopsis thaliana (Mouse-ear cress).